The chain runs to 54 residues: Large ribosomal subunit protein bL33 (54 aa).

The protein belongs to the bacterial ribosomal protein bL33 family.

The polypeptide is Large ribosomal subunit protein bL33 (Rhodopirellula baltica (strain DSM 10527 / NCIMB 13988 / SH1)).